A 263-amino-acid chain; its full sequence is Triosephosphate isomerase (263 aa).

Position 10-12 (10-12 (NWK)) interacts with substrate. H104 acts as the Electrophile in catalysis. E176 functions as the Proton acceptor in the catalytic mechanism. Substrate contacts are provided by residues G182, S221, and 242–243 (GG).

It belongs to the triosephosphate isomerase family. Homodimer.

It localises to the cytoplasm. It carries out the reaction D-glyceraldehyde 3-phosphate = dihydroxyacetone phosphate. The protein operates within carbohydrate biosynthesis; gluconeogenesis. It functions in the pathway carbohydrate degradation; glycolysis; D-glyceraldehyde 3-phosphate from glycerone phosphate: step 1/1. In terms of biological role, involved in the gluconeogenesis. Catalyzes stereospecifically the conversion of dihydroxyacetone phosphate (DHAP) to D-glyceraldehyde-3-phosphate (G3P). In Haemophilus influenzae (strain ATCC 51907 / DSM 11121 / KW20 / Rd), this protein is Triosephosphate isomerase.